Consider the following 134-residue polypeptide: DNA-binding protein inhibitor ID-2 (134 aa).

The tract at residues M1 to R24 is disordered. S14 and S25 each carry phosphoserine. Positions S23–L75 constitute a bHLH domain. The Nuclear export signal motif lies at L106–L115.

In terms of assembly, interacts with GATA4 and NKX2-5. Interacts with NR0B2. Interacts with CLOCK and BMAL1. Interacts with IFI204. Interacts with NEDD9/HEF1. Interacts with ASB4; this interaction promotes ID2 proteasomal degradation. Post-translationally, ubiquitinated in a ASB4-depedent manner, leading to proteasomal degradation. Phosphorylated in vitro by CDK1, PKA and PKC.

The protein localises to the cytoplasm. It localises to the nucleus. Transcriptional regulator (lacking a basic DNA binding domain) which negatively regulates the basic helix-loop-helix (bHLH) transcription factors by forming heterodimers and inhibiting their DNA binding and transcriptional activity. Implicated in regulating a variety of cellular processes, including cellular growth, senescence, differentiation, apoptosis, angiogenesis, and neoplastic transformation. Inhibits skeletal muscle and cardiac myocyte differentiation. Regulates the circadian clock by repressing the transcriptional activator activity of the CLOCK-BMAL1 heterodimer. Restricts the CLOCK and BMAL1 localization to the cytoplasm. Plays a role in both the input and output pathways of the circadian clock: in the input component, is involved in modulating the magnitude of photic entrainment and in the output component, contributes to the regulation of a variety of liver clock-controlled genes involved in lipid metabolism. In Bos taurus (Bovine), this protein is DNA-binding protein inhibitor ID-2 (ID2).